A 342-amino-acid chain; its full sequence is Phosphoribosylformylglycinamidine cyclo-ligase (342 aa).

Belongs to the AIR synthase family.

The protein resides in the cytoplasm. It carries out the reaction 2-formamido-N(1)-(5-O-phospho-beta-D-ribosyl)acetamidine + ATP = 5-amino-1-(5-phospho-beta-D-ribosyl)imidazole + ADP + phosphate + H(+). It participates in purine metabolism; IMP biosynthesis via de novo pathway; 5-amino-1-(5-phospho-D-ribosyl)imidazole from N(2)-formyl-N(1)-(5-phospho-D-ribosyl)glycinamide: step 2/2. The protein is Phosphoribosylformylglycinamidine cyclo-ligase of Staphylococcus aureus (strain Mu3 / ATCC 700698).